The following is a 582-amino-acid chain: Cryptochrome DASH, chloroplastic/mitochondrial (582 aa).

The transit peptide at 1–49 directs the protein to the chloroplast and mitochondrion; it reads MLHFLSSSSPLNPQFLLLPRQSARLRVLLSIPVSAMSSSSSSSSRGALA. The Photolyase/cryptochrome alpha/beta domain occupies 84 to 234; sequence GVAIVWFRND…KLQLIWGATL (151 aa). A disordered region spans residues 560–582; it reads GHQKRDQQFNRQRRPGHMYRRQK. A compositionally biased stretch (basic residues) spans 570–582; it reads RQRRPGHMYRRQK.

Belongs to the DNA photolyase class-1 family. It depends on FAD as a cofactor. The cofactor is (6R)-5,10-methylene-5,6,7,8-tetrahydrofolate.

Its subcellular location is the plastid. The protein localises to the chloroplast. It is found in the mitochondrion. Functionally, may have a photoreceptor function. Binds ss- and ds-DNA in a sequence non-specific manner, lacks photolyase activity. This is Cryptochrome DASH, chloroplastic/mitochondrial (CRYD) from Oryza sativa subsp. japonica (Rice).